A 259-amino-acid polypeptide reads, in one-letter code: Tryptophan synthase alpha chain (259 aa).

Active-site proton acceptor residues include glutamate 35 and aspartate 46.

The protein belongs to the TrpA family. As to quaternary structure, tetramer of two alpha and two beta chains.

The catalysed reaction is (1S,2R)-1-C-(indol-3-yl)glycerol 3-phosphate + L-serine = D-glyceraldehyde 3-phosphate + L-tryptophan + H2O. The protein operates within amino-acid biosynthesis; L-tryptophan biosynthesis; L-tryptophan from chorismate: step 5/5. The alpha subunit is responsible for the aldol cleavage of indoleglycerol phosphate to indole and glyceraldehyde 3-phosphate. This chain is Tryptophan synthase alpha chain, found in Methanococcus maripaludis (strain C7 / ATCC BAA-1331).